We begin with the raw amino-acid sequence, 608 residues long: Kelch-like protein 10 (608 aa).

The region spanning 39–106 is the BTB domain; it reads CDVVIKVNGF…AYTRTVPITP (68 aa). 6 Kelch repeats span residues 292–339, 340–386, 388–433, 434–480, 481–527, and 529–574; these read ILFA…YLKG, YVYI…VLGN, IYAM…TLYG, KVYI…AYGE, HVYA…VVDD, and LFVV…VVPG. Phosphoserine is present on Ser-501.

In terms of assembly, self-associates. Interacts with CUL3; indicative for the participation in an E3 ubiquitin ligase complex.

Its subcellular location is the cytoplasm. Its pathway is protein modification; protein ubiquitination. May be a substrate-specific adapter of a CUL3-based E3 ubiquitin-protein ligase complex which mediates the ubiquitination and subsequent proteasomal degradation of target proteins during spermatogenesis. The sequence is that of Kelch-like protein 10 (KLHL10) from Homo sapiens (Human).